The sequence spans 821 residues: DNA ligase (821 aa).

NAD(+) is bound by residues 50–54, 99–100, and glutamate 140; these read DAEYD and SL. The active-site N6-AMP-lysine intermediate is the lysine 142. 4 residues coordinate NAD(+): arginine 163, glutamate 200, lysine 319, and lysine 343. Cysteine 452, cysteine 455, cysteine 470, and cysteine 476 together coordinate Zn(2+). A BRCT domain is found at 742–821; sequence AAALPLEGKT…AGLQALLAGN (80 aa).

It belongs to the NAD-dependent DNA ligase family. LigA subfamily. The cofactor is Mg(2+). Mn(2+) is required as a cofactor.

It catalyses the reaction NAD(+) + (deoxyribonucleotide)n-3'-hydroxyl + 5'-phospho-(deoxyribonucleotide)m = (deoxyribonucleotide)n+m + AMP + beta-nicotinamide D-nucleotide.. Its function is as follows. DNA ligase that catalyzes the formation of phosphodiester linkages between 5'-phosphoryl and 3'-hydroxyl groups in double-stranded DNA using NAD as a coenzyme and as the energy source for the reaction. It is essential for DNA replication and repair of damaged DNA. The sequence is that of DNA ligase from Chromobacterium violaceum (strain ATCC 12472 / DSM 30191 / JCM 1249 / CCUG 213 / NBRC 12614 / NCIMB 9131 / NCTC 9757 / MK).